A 473-amino-acid polypeptide reads, in one-letter code: Proline--tRNA ligase (473 aa).

It belongs to the class-II aminoacyl-tRNA synthetase family. ProS type 3 subfamily. As to quaternary structure, homodimer.

It is found in the cytoplasm. The enzyme catalyses tRNA(Pro) + L-proline + ATP = L-prolyl-tRNA(Pro) + AMP + diphosphate. Functionally, catalyzes the attachment of proline to tRNA(Pro) in a two-step reaction: proline is first activated by ATP to form Pro-AMP and then transferred to the acceptor end of tRNA(Pro). This Mesoplasma florum (strain ATCC 33453 / NBRC 100688 / NCTC 11704 / L1) (Acholeplasma florum) protein is Proline--tRNA ligase.